A 331-amino-acid chain; its full sequence is Glycerophosphodiester phosphodiesterase 1 (331 aa).

Residues 1 to 3 (MWL) are Cytoplasmic-facing. A helical transmembrane segment spans residues 4–24 (WEDQGGLLGPFSFVLVLLLVV). The Lumenal segment spans residues 25–248 (TRSPFNACVL…PRYSVFWKQS (224 aa)). Positions 65–331 (VSAIAHRGGS…SMLEDCAPHF (267 aa)) constitute a GP-PDE domain. 2 residues coordinate Mg(2+): glutamate 97 and aspartate 99. The N-linked (GlcNAc...) asparagine glycan is linked to asparagine 168. Position 174 (aspartate 174) interacts with Mg(2+). Residues 249-269 (VFVVLDILLDWSMHNVLWYLC) form a helical membrane-spanning segment. Residues 270 to 331 (GISAFLMQKD…SMLEDCAPHF (62 aa)) lie on the Cytoplasmic side of the membrane.

The protein belongs to the glycerophosphoryl diester phosphodiesterase family. In terms of assembly, interacts with PRAF2. Interacts with RGS16. Mg(2+) serves as cofactor. N-glycosylated. In terms of tissue distribution, widely expressed. Highly expressed in the brain and spinal cord, followed by kidney, liver, and testis. In contrast, little or no expression is detected in the heart or spleen.

It is found in the cell membrane. It localises to the cytoplasmic vesicle membrane. It carries out the reaction sn-glycero-3-phospho-1D-myo-inositol + H2O = myo-inositol + sn-glycerol 3-phosphate + H(+). The catalysed reaction is 1-O-(1Z-octadecenyl)-sn-glycero-3-phospho-(N-5Z,8Z,11Z,14Z-eicosatetraenoyl)-ethanolamine + H2O = 1-O-(1Z-octadecenyl)-sn-glycero-3-phosphate + N-(5Z,8Z,11Z,14Z-eicosatetraenoyl)-ethanolamine + H(+). It catalyses the reaction 1-O-(1Z-octadecenyl)-sn-glycero-3-phospho-(N-9Z-octadecenoyl)-ethanolamine + H2O = 1-O-(1Z-octadecenyl)-sn-glycero-3-phosphate + N-(9Z-octadecenoyl) ethanolamine + H(+). The enzyme catalyses 1-O-(1Z-octadecenyl)-sn-glycero-3-phospho-N-hexadecanoyl-ethanolamine + H2O = 1-O-(1Z-octadecenyl)-sn-glycero-3-phosphate + N-hexadecanoylethanolamine + H(+). It carries out the reaction N-(4Z,7Z,10Z,13Z,16Z,19Z)-docosahexaenoyl-sn-glycero-3-phosphoethanolamine + H2O = N-(4Z,7Z,10Z,13Z,16Z,19Z)-docosahexaenoyl ethanolamine + sn-glycerol 3-phosphate + H(+). The catalysed reaction is N-eicosanoyl-sn-glycero-3-phosphoethanolamine + H2O = N-eicosanoyl ethanolamine + sn-glycerol 3-phosphate + H(+). It catalyses the reaction N-hexadecanoyl-sn-glycero-3-phosphoethanolamine + H2O = N-hexadecanoylethanolamine + sn-glycerol 3-phosphate + H(+). The enzyme catalyses N-(9Z-octadecenoyl)-sn-glycero-3-phosphoethanolamine + H2O = N-(9Z-octadecenoyl) ethanolamine + sn-glycerol 3-phosphate + H(+). It carries out the reaction N-(5Z,8Z,11Z,14Z-eicosatetraenoyl)-sn-glycero-3-phosphoethanolamine + H2O = N-(5Z,8Z,11Z,14Z-eicosatetraenoyl)-ethanolamine + sn-glycerol 3-phosphate + H(+). Inhibited by EDTA, calcium chloride, and zinc chloride. Enhanced by magnesium chloride. Glycerophosphodiester phosphodiesterase activity can be modulated by G-protein signaling pathways. In terms of biological role, hydrolyzes the phosphodiester bond of glycerophosphodiesters such as glycerophosphoinositol (GroPIns) and glycerophosphoethanolamine (GroPEth), to yield a glycerol phosphate and an alcohol. Hydrolyzes glycerophospho-N-acylethanolamines to N-acylethanolamines in the brain and participates in bioactive N-acylethanolamine biosynthesis such as anandamide (an endocannabinoid), N-palmitoylethanolamine (an anti-inflammatory), and N-oleoylethanolamine (an anorexic). In addition, has a lysophospholipase D activity by hydrolyzing N-acyl-lysoplasmenylethanolamine (N-acyl-lysoPlsEt) to N-acylethanolamine. However lysophospholipase D activity is lower than glycerophosphodiester phosphodiesterase activity. Has little or no activity towards glycerophosphocholine. The polypeptide is Glycerophosphodiester phosphodiesterase 1 (Mus musculus (Mouse)).